The primary structure comprises 251 residues: uncharacterized protein (251 aa).

Positions 1-25 (MRKKKFLSRFSFSSLFLLCGTLLSA) are cleaved as a signal peptide. Cys26 carries the N-palmitoyl cysteine lipid modification. A lipid anchor (S-diacylglycerol cysteine) is attached at Cys26.

It belongs to the MG439/MG440 family.

The protein resides in the cell membrane. This is an uncharacterized protein from Mycoplasma pneumoniae (strain ATCC 29342 / M129 / Subtype 1) (Mycoplasmoides pneumoniae).